A 396-amino-acid polypeptide reads, in one-letter code: ATP-dependent RNA helicase eIF4A (396 aa).

The Q motif motif lies at 23-51 (DSFDEMNLKSELLRGIYAYGFERPSAIQQ). The Helicase ATP-binding domain maps to 54 to 224 (IMPVIKGHDV…TKFMRDPVRI (171 aa)). Position 67 to 74 (67 to 74 (AQSGTGKT)) interacts with ATP. Residues 172–175 (DEAD) carry the DEAD box motif. In terms of domain architecture, Helicase C-terminal spans 235 to 396 (GIKQFYIAVE…EMPMNVADLI (162 aa)).

It belongs to the DEAD box helicase family. eIF4A subfamily. As to quaternary structure, component of the eIF4F complex, which composition varies with external and internal environmental conditions. It is composed of at least eIF4A, eIF4E and eIF4G.

Its subcellular location is the cytoplasm. The enzyme catalyses ATP + H2O = ADP + phosphate + H(+). In terms of biological role, ATP-dependent RNA helicase which is a subunit of the eIF4F complex involved in cap recognition and is required for mRNA binding to ribosome. In the current model of translation initiation, eIF4A unwinds RNA secondary structures in the 5'-UTR of mRNAs which is necessary to allow efficient binding of the small ribosomal subunit, and subsequent scanning for the initiator codon. The polypeptide is ATP-dependent RNA helicase eIF4A (TIF1) (Pyricularia oryzae (strain 70-15 / ATCC MYA-4617 / FGSC 8958) (Rice blast fungus)).